Reading from the N-terminus, the 280-residue chain is MSALNLTVRVHPVVLFQVVDAFERRNAESHRVIGTLLGSVEKGVVEVTNCFCVPHKEHDDQVEAELSYALDMYDLNRKVNSNEAVVGWWATGNDVTNHSSVIHEYYARECNNPVHLTVDTSLQGGRMGLRSYVCIQLGVPGGKTGCMFTPIPVELTSYEPETFGLKLLQKTVGVAPANRPKTVPPMLDLAQISEASTKLQSLLDLILKYVDDVIAHKVTPDNAVGRQLLDLIHSVPHMSHEQFTQMFNANVRNLLMVITLSQLIKTQLQLNEKLTFLPTA.

The MPN domain maps to 8 to 138; that stretch reads VRVHPVVLFQ…LRSYVCIQLG (131 aa).

Belongs to the eIF-3 subunit F family. As to quaternary structure, component of the eukaryotic translation initiation factor 3 (eIF-3) complex. The eIF-3 complex interacts with pix.

It is found in the cytoplasm. Its function is as follows. Component of the eukaryotic translation initiation factor 3 (eIF-3) complex, which is involved in protein synthesis of a specialized repertoire of mRNAs and, together with other initiation factors, stimulates binding of mRNA and methionyl-tRNAi to the 40S ribosome. The eIF-3 complex specifically targets and initiates translation of a subset of mRNAs involved in cell proliferation. This Drosophila persimilis (Fruit fly) protein is Eukaryotic translation initiation factor 3 subunit F-1.